We begin with the raw amino-acid sequence, 90 residues long: UPF0297 protein lwe1516 (90 aa).

It belongs to the UPF0297 family.

This chain is UPF0297 protein lwe1516, found in Listeria welshimeri serovar 6b (strain ATCC 35897 / DSM 20650 / CCUG 15529 / CIP 8149 / NCTC 11857 / SLCC 5334 / V8).